Here is a 388-residue protein sequence, read N- to C-terminus: Spermosin (388 aa).

An N-terminal signal peptide occupies residues M1–C22. A compositionally biased stretch (polar residues) spans F29–T49. Residues F29–E98 are disordered. Residues Q54–Y64 show a composition bias toward pro residues. Cystine bridges form between C116–C251, C163–C179, C265–C330, C295–C310, and C320–C349. The region spanning I130 to P372 is the Peptidase S1 domain. Residues H178 and D231 each act as charge relay system in the active site. S324 serves as the catalytic Charge relay system.

This sequence belongs to the peptidase S1 family. In terms of assembly, heterodimer of a heavy chain and either an L1 light chain or an L2 light chain linked by a disulfide bond. In terms of tissue distribution, detected in sperm, but not in unfertilized eggs (at protein level). Expressed in gonad, but not in hepatopancreas, intestine or branchial basket.

The protein localises to the secreted. The enzyme catalyses Hydrolyzes arginyl bonds, preferably with Pro in the P2 position.. With respect to regulation, inhibited by peptidyl-argininals with Pro in the P2 position, diisopropyl fluorophosphate, phenylmethanesulfonyl fluoride, leupeptin, antipain, soybean trypsin inhibitor, aprotinin, ovomucoid, valyl-prolyl-arginyl-chloromethane, glycyl-valyl-arginyl-chloromethane, p-aminobenzamidine, benzamidine, zinc chloride and mercuric chloride. Trypsin-like protease with a narrow substrate specificity. Preferentially hydrolyzes substrates with Pro in the P2 position and Val in the P3 position. Plays a role in fertilization. This is Spermosin from Halocynthia roretzi (Sea squirt).